We begin with the raw amino-acid sequence, 448 residues long: Glucose-6-phosphate isomerase (448 aa).

Residue E290 is the Proton donor of the active site. Active-site residues include H311 and K425.

Belongs to the GPI family.

Its subcellular location is the cytoplasm. The catalysed reaction is alpha-D-glucose 6-phosphate = beta-D-fructose 6-phosphate. The protein operates within carbohydrate biosynthesis; gluconeogenesis. It participates in carbohydrate degradation; glycolysis; D-glyceraldehyde 3-phosphate and glycerone phosphate from D-glucose: step 2/4. Functionally, catalyzes the reversible isomerization of glucose-6-phosphate to fructose-6-phosphate. This Latilactobacillus sakei subsp. sakei (strain 23K) (Lactobacillus sakei subsp. sakei) protein is Glucose-6-phosphate isomerase.